Reading from the N-terminus, the 500-residue chain is Replicase polyprotein 1ab (500 aa).

In terms of domain architecture, CoV Nsp1 globular spans 54–196 (LVNHVRVDCS…PWSILLRKGG (143 aa)). The region spanning 352 to 500 (AFDAIYSETL…MCKCSFKAYF (149 aa)) is the Peptidase C16 domain. The For PL1-PRO activity role is filled by Cys389. Residues 466–494 (CLKCGMELKLQGLDAVFFYGDVVSHMCKC) form a C4-type zinc finger.

It belongs to the coronaviruses polyprotein 1ab family.

Its function is as follows. The replicase polyprotein of coronaviruses is a multifunctional protein: it contains the activities necessary for the transcription of negative stranded RNA, leader RNA, subgenomic mRNAs and progeny virion RNA as well as proteinases responsible for the cleavage of the polyprotein into functional products. The papain-like proteinase 1 (PL1-PRO) is responsible for the cleavages located at the N-terminus of the replicase polyprotein. Activity of PL1-PRO is strongly dependent on zinc. Functionally, non-structural protein 1: binds to the 40S ribosomal subunit and inhibits host translation. The nsp1-40S ribosome complex further induces an endonucleolytic cleavage near the 5'UTR of host mRNAs, targeting them for degradation. By suppressing host gene expression, nsp1 facilitates efficient viral gene expression in infected cells and evasion from host immune response. In Mus musculus (Mouse), this protein is Replicase polyprotein 1ab (rep).